The chain runs to 30 residues: Cyclotide mden-I (30 aa).

The segment at residues 1 to 30 (GIPCGESCVYIPCITTAIGCSCKNKVCYRN) is a cross-link (cyclopeptide (Gly-Asn)). 3 cysteine pairs are disulfide-bonded: Cys-4–Cys-20, Cys-8–Cys-22, and Cys-13–Cys-27.

It belongs to the cyclotide family. Bracelet subfamily. In terms of processing, this is a cyclic peptide.

Functionally, probably participates in a plant defense mechanism. The protein is Cyclotide mden-I of Melicytus dentatus (Tree violet).